The primary structure comprises 437 residues: Acyl-coenzyme A thioesterase 9, mitochondrial (437 aa).

The transit peptide at 1 to 21 (MRRAALRLCTLSKGLLAPSRG) directs the protein to the mitochondrion. 2 consecutive HotDog ACOT-type domains span residues 84–207 (SYIE…RDSE) and 287–399 (ENSK…EKEV). Lys101 carries the N6-acetyllysine modification.

It belongs to the acyl coenzyme A hydrolase family. As to quaternary structure, interacts with NYAP1, NYAP2 and MYO16.

The protein resides in the mitochondrion. It localises to the mitochondrion matrix. The protein localises to the mitochondrion inner membrane. The catalysed reaction is butanoyl-CoA + H2O = butanoate + CoA + H(+). It carries out the reaction propanoyl-CoA + H2O = propanoate + CoA + H(+). It catalyses the reaction hexadecanoyl-CoA + H2O = hexadecanoate + CoA + H(+). The enzyme catalyses octanoyl-CoA + H2O = octanoate + CoA + H(+). The catalysed reaction is decanoyl-CoA + H2O = decanoate + CoA + H(+). It carries out the reaction tetradecanoyl-CoA + H2O = tetradecanoate + CoA + H(+). It catalyses the reaction 4,8-dimethylnonanoyl-CoA + H2O = 4,8-dimethylnonanoate + CoA + H(+). The enzyme catalyses 3-methylbutanoyl-CoA + H2O = 3-methylbutanoate + CoA + H(+). The catalysed reaction is 2-methylpropanoyl-CoA + H2O = 2-methylpropanoate + CoA + H(+). It participates in lipid metabolism; fatty acid metabolism. Strongly inhibited by NADH and CoA. In terms of biological role, mitochondrial acyl-CoA thioesterase. Catalyzes the hydrolysis of acyl-CoAs into free fatty acids and coenzyme A (CoA), regulating their respective intracellular levels. Regulates both mitochondrial lipid and amino acid metabolism. This is Acyl-coenzyme A thioesterase 9, mitochondrial (ACOT9) from Bos taurus (Bovine).